A 216-amino-acid chain; its full sequence is Thymidine kinase (216 aa).

Residues 9 to 16 (GTMDCGKS) and 86 to 89 (DEAQ) contribute to the ATP site. Glutamate 87 (proton acceptor) is an active-site residue.

This sequence belongs to the thymidine kinase family. As to quaternary structure, homotetramer.

The protein localises to the cytoplasm. The catalysed reaction is thymidine + ATP = dTMP + ADP + H(+). The chain is Thymidine kinase from Streptomyces avermitilis (strain ATCC 31267 / DSM 46492 / JCM 5070 / NBRC 14893 / NCIMB 12804 / NRRL 8165 / MA-4680).